The sequence spans 41 residues: Large ribosomal subunit protein bL36 (41 aa).

It belongs to the bacterial ribosomal protein bL36 family.

This is Large ribosomal subunit protein bL36 from Rhodopseudomonas palustris (strain BisA53).